The chain runs to 102 residues: NADH-quinone oxidoreductase subunit K (102 aa).

Helical transmembrane passes span 6–26 (LEHG…GLMV), 30–50 (ILFV…AFIV), and 62–82 (VMFI…LAIL).

Belongs to the complex I subunit 4L family. NDH-1 is composed of 13 different subunits. Subunits NuoA, H, J, K, L, M, N constitute the membrane sector of the complex.

It is found in the cell inner membrane. It carries out the reaction a quinone + NADH + 5 H(+)(in) = a quinol + NAD(+) + 4 H(+)(out). Its function is as follows. NDH-1 shuttles electrons from NADH, via FMN and iron-sulfur (Fe-S) centers, to quinones in the respiratory chain. The immediate electron acceptor for the enzyme in this species is believed to be ubiquinone. Couples the redox reaction to proton translocation (for every two electrons transferred, four hydrogen ions are translocated across the cytoplasmic membrane), and thus conserves the redox energy in a proton gradient. The chain is NADH-quinone oxidoreductase subunit K from Pseudomonas fluorescens (strain SBW25).